A 68-amino-acid chain; its full sequence is Alpha-conotoxin-like Lt1.2 (68 aa).

A signal peptide spans 1 to 21; that stretch reads MGMRMMFIMFMLVVLATTVDT. A propeptide spanning residues 22–48 is cleaved from the precursor; sequence FTSDRALDAMNAAASNKASRLIALAVR. 2 cysteine pairs are disulfide-bonded: C50/C56 and C51/C64. A lacks the Ser-Xaa-Pro motif that is crucial for potent interaction with nAChR region spans residues 52-54; the sequence is ARA. G65 is subject to Glycine amide.

The protein belongs to the conotoxin A superfamily. In terms of tissue distribution, expressed by the venom duct.

The protein resides in the secreted. Alpha-conotoxins act on postsynaptic membranes, they bind to the nicotinic acetylcholine receptors (nAChR) and thus inhibit them. Has a distinct nAChR binding mode from other alpha-conotoxins, due to a different three residue motif (Ala-Xaa-Ala instead of the conserved Ser-Xaa-Pro motif). In Conus litteratus (Lettered cone), this protein is Alpha-conotoxin-like Lt1.2.